The following is a 791-amino-acid chain: Major facilitator superfamily domain-containing protein 6 (791 aa).

Ala2 carries the N-acetylalanine modification. Thr10 is modified (phosphothreonine). The disordered stretch occupies residues 22–47 (LADPFNGISREPEPPSNETPSSTETS). Residues 37–47 (SNETPSSTETS) are compositionally biased toward low complexity. The next 6 helical transmembrane spans lie at 73–93 (VFYF…PVYY), 105–125 (LLVG…GVVA), 132–152 (KIVL…IGFV), 286–306 (AIFL…ASSV), 335–355 (WGLA…EVLI), and 369–389 (QIVF…ATQF). Residues 407–427 (EIPQVERNNSTESSEETPTTT) form a disordered region. Positions 416 to 427 (STESSEETPTTT) are enriched in low complexity. A run of 6 helical transmembrane segments spans residues 450–470 (VLFV…FLYW), 479–499 (TTLF…AYFF), 507–527 (IGHI…YIYI), 544–564 (GVTH…AVPP), 579–599 (LGLG…YFGA), and 605–625 (GIGM…WLAV). Disordered regions lie at residues 662–687 (MPRI…NKPA) and 723–791 (LQGT…AGGH). Positions 750–768 (SRNQPSPDAAASQTQTSPA) are enriched in polar residues. The segment covering 782–791 (QQAQLAAGGH) has biased composition (low complexity).

This sequence belongs to the major facilitator superfamily. MFSD6 family. May interact with HLA-B62. In terms of tissue distribution, widely expressed. Expression levels in peripheral blood mononuclear cells are highly variable between individuals, including no expression at all.

It localises to the membrane. This is Major facilitator superfamily domain-containing protein 6 (MFSD6) from Homo sapiens (Human).